The sequence spans 333 residues: Glycerol-3-phosphate dehydrogenase [NAD(P)+] (333 aa).

NADPH contacts are provided by Ser10, Trp11, His31, Arg32, and Lys105. Sn-glycerol 3-phosphate contacts are provided by Lys105, Gly136, and Ser138. Position 140 (Ala140) interacts with NADPH. Lys191, Asp244, Ser254, Arg255, and Asn256 together coordinate sn-glycerol 3-phosphate. The Proton acceptor role is filled by Lys191. Residue Arg255 coordinates NADPH. NADPH is bound by residues Val279 and Glu281.

This sequence belongs to the NAD-dependent glycerol-3-phosphate dehydrogenase family.

The protein localises to the cytoplasm. The catalysed reaction is sn-glycerol 3-phosphate + NAD(+) = dihydroxyacetone phosphate + NADH + H(+). It catalyses the reaction sn-glycerol 3-phosphate + NADP(+) = dihydroxyacetone phosphate + NADPH + H(+). It participates in membrane lipid metabolism; glycerophospholipid metabolism. Its function is as follows. Catalyzes the reduction of the glycolytic intermediate dihydroxyacetone phosphate (DHAP) to sn-glycerol 3-phosphate (G3P), the key precursor for phospholipid synthesis. This chain is Glycerol-3-phosphate dehydrogenase [NAD(P)+], found in Chlorobium phaeobacteroides (strain DSM 266 / SMG 266 / 2430).